Consider the following 231-residue polypeptide: Ribosyldihydronicotinamide dehydrogenase [quinone] (231 aa).

FAD is bound by residues histidine 12 and 18 to 21 (FNGS). The residue at position 80 (serine 80) is a Phosphoserine. Residue 104 to 107 (LYWF) participates in FAD binding. 127–129 (FDI) is a binding site for substrate. FAD-binding positions include 148–151 (TTGG) and tyrosine 156. Histidine 174 and histidine 178 together coordinate Zn(2+). Glutamate 194 lines the FAD pocket. Position 197 is a phosphoserine (serine 197). Arginine 201 lines the FAD pocket. Cysteine 223 is a binding site for Zn(2+).

The protein belongs to the NAD(P)H dehydrogenase (quinone) family. As to quaternary structure, homodimer. Zn(2+) is required as a cofactor. FAD serves as cofactor.

The protein resides in the cytoplasm. The catalysed reaction is 1-(beta-D-ribofuranosyl)-1,4-dihydronicotinamide + a quinone + H(+) = beta-nicotinamide D-riboside + a quinol. Inhibited by melatonin, resveratrol and 5-hydroxytryptamine. The enzyme apparently serves as a quinone reductase in connection with conjugation reactions of hydroquinones involved in detoxification pathways as well as in biosynthetic processes such as the vitamin K-dependent gamma-carboxylation of glutamate residues in prothrombin synthesis. This chain is Ribosyldihydronicotinamide dehydrogenase [quinone] (NQO2), found in Homo sapiens (Human).